Reading from the N-terminus, the 156-residue chain is ATP synthase subunit b (156 aa).

A helical membrane pass occupies residues 7-27; it reads LFAQMVVFLILAWFTMKFVWP.

It belongs to the ATPase B chain family. In terms of assembly, F-type ATPases have 2 components, F(1) - the catalytic core - and F(0) - the membrane proton channel. F(1) has five subunits: alpha(3), beta(3), gamma(1), delta(1), epsilon(1). F(0) has three main subunits: a(1), b(2) and c(10-14). The alpha and beta chains form an alternating ring which encloses part of the gamma chain. F(1) is attached to F(0) by a central stalk formed by the gamma and epsilon chains, while a peripheral stalk is formed by the delta and b chains.

The protein localises to the cell inner membrane. Functionally, f(1)F(0) ATP synthase produces ATP from ADP in the presence of a proton or sodium gradient. F-type ATPases consist of two structural domains, F(1) containing the extramembraneous catalytic core and F(0) containing the membrane proton channel, linked together by a central stalk and a peripheral stalk. During catalysis, ATP synthesis in the catalytic domain of F(1) is coupled via a rotary mechanism of the central stalk subunits to proton translocation. Its function is as follows. Component of the F(0) channel, it forms part of the peripheral stalk, linking F(1) to F(0). The sequence is that of ATP synthase subunit b from Paraburkholderia xenovorans (strain LB400).